A 257-amino-acid polypeptide reads, in one-letter code: Thiazole synthase (257 aa).

Lys98 acts as the Schiff-base intermediate with DXP in catalysis. Residues Gly159, 185 to 186 (AG), and 207 to 208 (NT) contribute to the 1-deoxy-D-xylulose 5-phosphate site.

This sequence belongs to the ThiG family. In terms of assembly, homotetramer. Forms heterodimers with either ThiH or ThiS.

Its subcellular location is the cytoplasm. The catalysed reaction is [ThiS sulfur-carrier protein]-C-terminal-Gly-aminoethanethioate + 2-iminoacetate + 1-deoxy-D-xylulose 5-phosphate = [ThiS sulfur-carrier protein]-C-terminal Gly-Gly + 2-[(2R,5Z)-2-carboxy-4-methylthiazol-5(2H)-ylidene]ethyl phosphate + 2 H2O + H(+). Its pathway is cofactor biosynthesis; thiamine diphosphate biosynthesis. Its function is as follows. Catalyzes the rearrangement of 1-deoxy-D-xylulose 5-phosphate (DXP) to produce the thiazole phosphate moiety of thiamine. Sulfur is provided by the thiocarboxylate moiety of the carrier protein ThiS. In vitro, sulfur can be provided by H(2)S. The sequence is that of Thiazole synthase from Anaeromyxobacter dehalogenans (strain 2CP-1 / ATCC BAA-258).